Here is a 233-residue protein sequence, read N- to C-terminus: Antilisterial bacteriocin subtilosin biosynthesis protein AlbG (233 aa).

5 consecutive transmembrane segments (helical) span residues 4–24 (STVF…FGWV), 46–66 (GLLA…LHYV), 116–136 (TYVM…FEIV), 145–165 (TPPI…LFYM), and 192–212 (IGWM…LAAI).

The protein localises to the cell membrane. In terms of biological role, involved in the production of the bacteriocin subtilosin. This Bacillus subtilis protein is Antilisterial bacteriocin subtilosin biosynthesis protein AlbG (albG).